The sequence spans 96 residues: ASNSD1 upstream open reading frame protein (96 aa).

A compositionally biased stretch (basic and acidic residues) spans 1 to 10 (MPSRGTRPED). Residues 1-28 (MPSRGTRPEDSSVLIPTDNSTPHKEDLS) are disordered. Residues 23–96 (HKEDLSSKIK…ENLDKTKIKK (74 aa)) adopt a coiled-coil conformation.

In terms of assembly, component of the PAQosome complex which is responsible for the biogenesis of several protein complexes and which consists of R2TP complex members RUVBL1, RUVBL2, RPAP3 and PIH1D1, URI complex members PFDN2, PFDN6, PDRG1, UXT and URI1 as well as ASDURF, POLR2E and DNAAF10/WDR92.

Its subcellular location is the cytoplasm. In Homo sapiens (Human), this protein is ASNSD1 upstream open reading frame protein.